The following is a 330-amino-acid chain: uncharacterized protein (330 aa).

One can recognise an ABC transporter domain in the interval 4–242; it reads LTISDLVVEY…AGEVLFEQST (239 aa). 40–47 serves as a coordination point for ATP; the sequence is GPSGCGKT. Position 210–330 (210–330) interacts with a nucleoside 3',5'-cyclic phosphate; it reads DRVLELMPAQ…LIEHRELASE (121 aa).

This sequence belongs to the ABC transporter superfamily.

This is an uncharacterized protein from Mycobacterium bovis (strain ATCC BAA-935 / AF2122/97).